The following is a 150-amino-acid chain: Large ribosomal subunit protein bL9 (150 aa).

The protein belongs to the bacterial ribosomal protein bL9 family.

Binds to the 23S rRNA. This Streptococcus pyogenes serotype M3 (strain SSI-1) protein is Large ribosomal subunit protein bL9.